Consider the following 522-residue polypeptide: Probable poly(ADP-ribose) glycohydrolase 2 (522 aa).

The protein belongs to the poly(ADP-ribose) glycohydrolase family.

The catalysed reaction is [(1''-&gt;2')-ADP-alpha-D-ribose](n) + H2O = [(1''-&gt;2')-ADP-alpha-D-ribose](n-1) + ADP-D-ribose. Poly(ADP-ribose) synthesized after DNA damage is only present transiently and is rapidly degraded by poly(ADP-ribose) glycohydrolase. The polypeptide is Probable poly(ADP-ribose) glycohydrolase 2 (PARG2) (Arabidopsis thaliana (Mouse-ear cress)).